A 296-amino-acid polypeptide reads, in one-letter code: Ribosomal protein L11 methyltransferase (296 aa).

S-adenosyl-L-methionine contacts are provided by Thr-146, Gly-167, Asp-189, and Asn-231.

Belongs to the methyltransferase superfamily. PrmA family.

It localises to the cytoplasm. It carries out the reaction L-lysyl-[protein] + 3 S-adenosyl-L-methionine = N(6),N(6),N(6)-trimethyl-L-lysyl-[protein] + 3 S-adenosyl-L-homocysteine + 3 H(+). Functionally, methylates ribosomal protein L11. This Haemophilus influenzae (strain ATCC 51907 / DSM 11121 / KW20 / Rd) protein is Ribosomal protein L11 methyltransferase.